The following is a 158-amino-acid chain: Transcriptional regulator MraZ (158 aa).

2 consecutive SpoVT-AbrB domains span residues 5-52 and 91-134; these read IYET…TFSS and AVEC…SQAE.

This sequence belongs to the MraZ family. In terms of assembly, forms oligomers.

The protein resides in the cytoplasm. Its subcellular location is the nucleoid. The chain is Transcriptional regulator MraZ from Geobacter sulfurreducens (strain ATCC 51573 / DSM 12127 / PCA).